A 1252-amino-acid chain; its full sequence is DNA-directed RNA polymerase subunit beta (1252 aa).

It belongs to the RNA polymerase beta chain family. The RNAP catalytic core consists of 2 alpha, 1 beta, 1 beta' and 1 omega subunit. When a sigma factor is associated with the core the holoenzyme is formed, which can initiate transcription.

The catalysed reaction is RNA(n) + a ribonucleoside 5'-triphosphate = RNA(n+1) + diphosphate. In terms of biological role, DNA-dependent RNA polymerase catalyzes the transcription of DNA into RNA using the four ribonucleoside triphosphates as substrates. In Chlamydia caviae (strain ATCC VR-813 / DSM 19441 / 03DC25 / GPIC) (Chlamydophila caviae), this protein is DNA-directed RNA polymerase subunit beta.